Here is a 541-residue protein sequence, read N- to C-terminus: GMP synthase [glutamine-hydrolyzing] (541 aa).

Residues 15 to 209 form the Glutamine amidotransferase type-1 domain; it reads TILTLDFGSQ…AVNICGCKQN (195 aa). Catalysis depends on C91, which acts as the Nucleophile. Residues H183 and E185 contribute to the active site. The 207-residue stretch at 210 to 416 folds into the GMPS ATP-PPase domain; the sequence is WTMARFVDQE…LGIAHEMVMR (207 aa). An ATP-binding site is contributed by 238-244; the sequence is SGGVDST. 4 residues coordinate XMP: R311, D478, K533, and E539.

As to quaternary structure, homodimer. The cofactor is Mg(2+).

It localises to the cytoplasm. The protein resides in the cytosol. It catalyses the reaction XMP + L-glutamine + ATP + H2O = GMP + L-glutamate + AMP + diphosphate + 2 H(+). The protein operates within purine metabolism; GMP biosynthesis; GMP from XMP (L-Gln route): step 1/1. Catalyzes the conversion of xanthine monophosphate (XMP) to GMP in the presence of glutamine and ATP through an adenyl-XMP intermediate. The chain is GMP synthase [glutamine-hydrolyzing] (gua1) from Aspergillus oryzae (strain ATCC 42149 / RIB 40) (Yellow koji mold).